A 325-amino-acid polypeptide reads, in one-letter code: MSWLTPDLIDILLSILKAVVILLVVVTCGAFMSFGERRLLGLFQNRYGPNRVGWGGSLQLVADMIKMFFKEDWIPKFSDRVIFTLAPMIAFTSLLLAFAIVPVSPTWVVADLNIGILFFLMMAGLAVYAVLFAGWSSNNKYSLLGAMRASAQTLSYEVFLGLSLMGVVAQAGSFNMTDIVNNQADIWNVIPQFFGFVTFAIAGVAVCHRHPFDQPEAEQELADGYHIEYSGMKFGLFFVGEYIGIVTISALMVTLFFGGWHGPFLPPFIWFALKTAFFMMMFILIRASLPRPRYDQVMSFGWKVCLPLTLVNLLVTAAVILWQAQ.

8 consecutive transmembrane segments (helical) span residues 11–31 (ILLS…CGAF), 81–101 (VIFT…FAIV), 114–134 (IGIL…LFAG), 154–174 (LSYE…AGSF), 186–206 (IWNV…GVAV), 237–257 (FFVG…TLFF), 265–285 (LPPF…FILI), and 304–324 (VCLP…LWQA).

This sequence belongs to the complex I subunit 1 family. In terms of assembly, NDH-1 is composed of 13 different subunits. Subunits NuoA, H, J, K, L, M, N constitute the membrane sector of the complex.

The protein localises to the cell inner membrane. The catalysed reaction is a quinone + NADH + 5 H(+)(in) = a quinol + NAD(+) + 4 H(+)(out). Functionally, NDH-1 shuttles electrons from NADH, via FMN and iron-sulfur (Fe-S) centers, to quinones in the respiratory chain. The immediate electron acceptor for the enzyme in this species is believed to be ubiquinone. Couples the redox reaction to proton translocation (for every two electrons transferred, four hydrogen ions are translocated across the cytoplasmic membrane), and thus conserves the redox energy in a proton gradient. This subunit may bind ubiquinone. This chain is NADH-quinone oxidoreductase subunit H, found in Enterobacter sp. (strain 638).